A 259-amino-acid chain; its full sequence is MLQIADTTFTSRLFTGTGKFATPTLMLEALQASGSQLVTMAMKRVDLRGGNDAILAPLQQLGVRLLPNTSGAKTAAEAVFAARLAREALGTHWVKLEIHPDVKYLLPDPIETLKAAEILVKEGFVVLPYCGADPVLCKRLEEAGCAAVMPLGAPIGSNRGLRTRDFLEIIIEQARVPVVVDAGIGAPSHALEAMELGADAVLVNTAIAVARDPVQMARAFRLALEAGELARQAGLGSSQRNAVASSPLTAFLSQTGETL.

Lys-95 serves as the catalytic Schiff-base intermediate with DXP. Residues Gly-156, 182 to 183 (AG), and 204 to 205 (NT) contribute to the 1-deoxy-D-xylulose 5-phosphate site.

The protein belongs to the ThiG family. Homotetramer. Forms heterodimers with either ThiH or ThiS.

The protein resides in the cytoplasm. It catalyses the reaction [ThiS sulfur-carrier protein]-C-terminal-Gly-aminoethanethioate + 2-iminoacetate + 1-deoxy-D-xylulose 5-phosphate = [ThiS sulfur-carrier protein]-C-terminal Gly-Gly + 2-[(2R,5Z)-2-carboxy-4-methylthiazol-5(2H)-ylidene]ethyl phosphate + 2 H2O + H(+). It participates in cofactor biosynthesis; thiamine diphosphate biosynthesis. Functionally, catalyzes the rearrangement of 1-deoxy-D-xylulose 5-phosphate (DXP) to produce the thiazole phosphate moiety of thiamine. Sulfur is provided by the thiocarboxylate moiety of the carrier protein ThiS. In vitro, sulfur can be provided by H(2)S. The protein is Thiazole synthase of Serratia proteamaculans (strain 568).